Consider the following 518-residue polypeptide: MGLESVVQTMNNQSPDNNSQSRTKTTNHFLIIEQSPASWEVGDTKMCVKSSTVENVSSACFKHQQSMGKMDEPRAVLQRSHSDLTCSCKQQSYVTHVETSATDSSLSSSSSRHGPSVVRMSFQTERYGSGIRNKENTSHYQNLVTHLPALPIDQKVPTNTFDSGGIPHNTTVYTDPGRFHSAVLGPHMPGNGFSNRTMLSQATGIIHGGLTYSNIPNSAFSPMAMTVHNSSAVPCNIRQDSCMKVDATIPAYCHSLPIPSIQLVPRLVCSVSESGKEQAAPDYFHSFSTSDILTYPKLVSSVSESGLDAKRVLKCCSIPGEQLQHAQRCTQQERASSETQTACVAFSSQQTTDVAMKTKDMWTMTSANDLTKGLKPALERRDAEVQTLPTMECKSVATSPAAAAESHSHVFPEVNLEQDLEAPKSPVREVRWDDEGMTWEVYGASVDPEVLGLAIQKHLEIQIEQFQTEPAQQTGKSDEDPLNKEPSSDKMEKKRPFRTMMHSLRYPSCCARSSTAVE.

Disordered stretches follow at residues 1–23 and 467–500; these read MGLESVVQTMNNQSPDNNSQSRT and QTEPAQQTGKSDEDPLNKEPSSDKMEKKRPFRTM. Residues 476–494 are compositionally biased toward basic and acidic residues; that stretch reads KSDEDPLNKEPSSDKMEKK.

May interact with GNAO1.

Its function is as follows. May be involved in neurite outgrowth. This Gallus gallus (Chicken) protein is GRIN2-like protein.